Consider the following 208-residue polypeptide: Small ribosomal subunit protein uS5 (208 aa).

The S5 DRBM domain maps to 48 to 111 (LEDEVLDINM…DAAKLDITYI (64 aa)).

It belongs to the universal ribosomal protein uS5 family. In terms of assembly, part of the 30S ribosomal subunit. Contacts protein S4.

With S4 and S12 plays an important role in translational accuracy. The polypeptide is Small ribosomal subunit protein uS5 (Methanosarcina barkeri (strain Fusaro / DSM 804)).